A 116-amino-acid polypeptide reads, in one-letter code: Ly-6/neurotoxin-like protein 1 (116 aa).

The N-terminal stretch at 1–20 (MTPLLTLFLVALIGLPLAQA) is a signal peptide. Residues 21–105 (LDCHVCAYNG…FAAPATLALA (85 aa)) form the UPAR/Ly6 domain. Cystine bridges form between cysteine 23–cysteine 46, cysteine 26–cysteine 33, cysteine 39–cysteine 64, cysteine 68–cysteine 85, and cysteine 86–cysteine 91. Asparagine 92 carries GPI-anchor amidated asparagine lipidation. Positions 93–116 (GAGFAAPATLALAPILLATLWGLL) are cleaved as a propeptide — removed in mature form.

As to quaternary structure, interacts with nAChRs containing alpha-4:beta-2 (CHRNA4:CHRNB2) and alpha-7 (CHRNA7) subunits. Interacts with CHRNA4 probably in the endoplasmic reticulum prior to nAChR pentameric assembly. Interacts with KCNA2/Potassium voltage-gated channel subfamily A member 2.

The protein resides in the cell membrane. The protein localises to the cell projection. It localises to the dendrite. It is found in the endoplasmic reticulum. In terms of biological role, acts in different tissues through interaction to nicotinic acetylcholine receptors (nAChRs). The proposed role as modulator of nAChR activity seems to be dependent on the nAChR subtype and stoichiometry, and to involve an effect on nAChR trafficking and its cell surface expression, and on single channel properties of the nAChR inserted in the plasma membrane. Modulates functional properties of nicotinic acetylcholine receptors (nAChRs) to prevent excessive excitation, and hence neurodegeneration. Enhances desensitization by increasing both the rate and extent of desensitization of alpha-4:beta-2-containing nAChRs and slowing recovery from desensitization. Promotes large amplitude ACh-evoked currents through alpha-4:beta-2 nAChRs. Is involved in regulation of the nAChR pentameric assembly in the endoplasmic reticulum. Shifts stoichiometry from high sensitivity alpha-4(2):beta-2(3) to low sensitivity alpha-4(3):beta-2(2) nAChR. In vitro modulates alpha-3:beta-4-containing nAChRs. Reduces cell surface expression of (alpha-3:beta-4)(2):beta-4 and (alpha-3:beta-4)(2):alpha-5 nAChRs suggesting an interaction with nAChR alpha-3(-):(+)beta-4 subunit interfaces and an allosteric mode. Corresponding single channel effects characterized by decreased unitary conductance, altered burst proportions and enhanced desensitization/inactivation seem to depend on nAChR alpha:alpha subunit interfaces and are greater in (alpha-3:beta-2)(2):alpha-3 when compared to (alpha-3:beta-2)(2):alpha-5 nAChRs. Prevents plasticity in the primary visual cortex late in life. In Saimiri boliviensis boliviensis (Bolivian squirrel monkey), this protein is Ly-6/neurotoxin-like protein 1.